A 329-amino-acid chain; its full sequence is PTS-dependent dihydroxyacetone kinase 1, dihydroxyacetone-binding subunit DhaK (329 aa).

One can recognise a DhaK domain in the interval 7-329 (GTDQVVEQMV…LKLPVDTIAW (323 aa)). Residues 53–56 (GSGH), K104, and D109 contribute to the dihydroxyacetone site. The active-site Proton acceptor is H56. The active-site Tele-hemiaminal-histidine intermediate is the H218.

In terms of assembly, homodimer. The dihydroxyacetone kinase complex is composed of a homodimer of DhaM, a homodimer of DhaK and the subunit DhaL.

The protein localises to the cytoplasm. The catalysed reaction is dihydroxyacetone + phosphoenolpyruvate = dihydroxyacetone phosphate + pyruvate. Its pathway is polyol metabolism; glycerol degradation. Dihydroxyacetone binding subunit of the dihydroxyacetone kinase, which is responsible for the phosphoenolpyruvate (PEP)-dependent phosphorylation of dihydroxyacetone via a phosphoryl group transfer from DhaL-ATP. This Listeria innocua serovar 6a (strain ATCC BAA-680 / CLIP 11262) protein is PTS-dependent dihydroxyacetone kinase 1, dihydroxyacetone-binding subunit DhaK.